A 273-amino-acid chain; its full sequence is 2,3,4,5-tetrahydropyridine-2,6-dicarboxylate N-succinyltransferase (273 aa).

Substrate is bound by residues Arg-104 and Asp-141.

This sequence belongs to the transferase hexapeptide repeat family. Homotrimer.

The protein localises to the cytoplasm. The catalysed reaction is (S)-2,3,4,5-tetrahydrodipicolinate + succinyl-CoA + H2O = (S)-2-succinylamino-6-oxoheptanedioate + CoA. It participates in amino-acid biosynthesis; L-lysine biosynthesis via DAP pathway; LL-2,6-diaminopimelate from (S)-tetrahydrodipicolinate (succinylase route): step 1/3. This Nitrosospira multiformis (strain ATCC 25196 / NCIMB 11849 / C 71) protein is 2,3,4,5-tetrahydropyridine-2,6-dicarboxylate N-succinyltransferase.